The primary structure comprises 433 residues: 3-phosphoshikimate 1-carboxyvinyltransferase (433 aa).

The 3-phosphoshikimate site is built by Lys23, Ser24, and Arg28. Phosphoenolpyruvate is bound at residue Lys23. Phosphoenolpyruvate contacts are provided by Gly95 and Arg123. Positions 167, 169, 317, and 344 each coordinate 3-phosphoshikimate. Phosphoenolpyruvate is bound at residue Gln169. Asp317 acts as the Proton acceptor in catalysis. Phosphoenolpyruvate contacts are provided by Arg348 and Arg390.

The protein belongs to the EPSP synthase family. Monomer.

The protein resides in the cytoplasm. The enzyme catalyses 3-phosphoshikimate + phosphoenolpyruvate = 5-O-(1-carboxyvinyl)-3-phosphoshikimate + phosphate. It functions in the pathway metabolic intermediate biosynthesis; chorismate biosynthesis; chorismate from D-erythrose 4-phosphate and phosphoenolpyruvate: step 6/7. Its function is as follows. Catalyzes the transfer of the enolpyruvyl moiety of phosphoenolpyruvate (PEP) to the 5-hydroxyl of shikimate-3-phosphate (S3P) to produce enolpyruvyl shikimate-3-phosphate and inorganic phosphate. In Staphylococcus epidermidis (strain ATCC 12228 / FDA PCI 1200), this protein is 3-phosphoshikimate 1-carboxyvinyltransferase.